A 530-amino-acid polypeptide reads, in one-letter code: UDP-glucuronosyltransferase 1A9 (530 aa).

The signal sequence occupies residues 1–25 (MACTGWTSPLPLCVCLLLTCGFAEA). N-linked (GlcNAc...) asparagine glycosylation occurs at Asn-71. Lys-99 bears the N6-succinyllysine mark. 2 N-linked (GlcNAc...) asparagine glycosylation sites follow: Asn-292 and Asn-344. A helical transmembrane segment spans residues 488–504 (VIGFLLAVVLTVAFITF).

It belongs to the UDP-glycosyltransferase family. Homodimer. Homooligomer. Interacts with UGT1A1, UGT1A3, UGT1A4, UGT1A6, UGT1A7, UGT1A8 and UGT1A10 to form heterodimers. Isoform 1 interacts with isoform 2/i2 suggesting that oligomerization is involved in negative regulation of transferase activity by isoform 2. Isoform 1 also interacts with respective i2 isoforms of UGT1A1, UGT1A3, UGT1A4, UGT1A6, UGT1A7, UGT1A8 and UGT1A10. As to expression, expressed in liver, kidney, colon, esophagus and small intestine.

Its subcellular location is the endoplasmic reticulum membrane. It carries out the reaction glucuronate acceptor + UDP-alpha-D-glucuronate = acceptor beta-D-glucuronoside + UDP + H(+). It catalyses the reaction 2-hydroxy-17beta-estradiol + UDP-alpha-D-glucuronate = 2-hydroxy-17beta-estradiol 3-O-(beta-D-glucuronate) + UDP + H(+). The catalysed reaction is 4-hydroxy-17beta-estradiol + UDP-alpha-D-glucuronate = 17beta-estradiol 4-O-(beta-D-glucuronate) + UDP + H(+). The enzyme catalyses 2-hydroxyestrone + UDP-alpha-D-glucuronate = 2-hydroxyestrone 3-O-(beta-D-glucuronate) + UDP + H(+). It carries out the reaction 4-hydroxyestrone + UDP-alpha-D-glucuronate = estrone 4-O-(beta-D-glucuronate) + UDP + H(+). It catalyses the reaction prunetin + UDP-alpha-D-glucuronate = prunetin-5-O-beta-D-glucuronide + UDP. The catalysed reaction is 8-iso-prostaglandin F2alpha + UDP-alpha-D-glucuronate = 8-iso-prostaglandin F2alpha-glucuronide + UDP + H(+). The enzyme catalyses 5-epi-5-F2t-IsoP + UDP-alpha-D-glucuronate = 5-epi-5-F2t-IsoP-glucuronide + UDP + H(+). It carries out the reaction (5Z,8Z,11Z,14Z)-eicosatetraenoate + UDP-alpha-D-glucuronate = O-[(5Z),(8Z),(11Z),(14Z)-eicosatetraenoyl]-beta-D-glucuronate + UDP. It catalyses the reaction 15-hydroxy-(5Z,8Z,11Z,13E)-eicosatetraenoate + UDP-alpha-D-glucuronate = 15-O-(beta-D-glucuronosyl)-(5Z,8Z,11Z,14Z)-eicosatetraenoate + UDP + H(+). The catalysed reaction is prostaglandin B1 + UDP-alpha-D-glucuronate = 15-O-(beta-D-glucuronosyl)-prostaglandin B1 + UDP + H(+). The enzyme catalyses (E)-ferulate + UDP-alpha-D-glucuronate = (E)-4-O-(beta-D-glucuronosyl)-ferulate + UDP + H(+). It carries out the reaction (E)-ferulate + UDP-alpha-D-glucuronate = (E)-ferulic acid beta-D-glucuronate ester + UDP. It catalyses the reaction candesartan + UDP-alpha-D-glucuronate = candesartan O-beta-D-glucuronoside + UDP. The catalysed reaction is SN-38 + UDP-alpha-D-glucuronate = SN-38 O-beta-D-glucuronide + UDP + H(+). The enzyme catalyses mycophenolate + UDP-alpha-D-glucuronate = mycophenolate 7-O-beta-D-glucuronide + UDP + H(+). Functionally, UDP-glucuronosyltransferase (UGT) that catalyzes phase II biotransformation reactions in which lipophilic substrates are conjugated with glucuronic acid to increase the metabolite's water solubility, thereby facilitating excretion into either the urine or bile. Essential for the elimination and detoxification of drugs, xenobiotics and endogenous compounds. Catalyzes the glucuronidation of endogenous estrogen hormones such as estradiol and estrone. Involved in the glucuronidation of arachidonic acid (AA) and AA-derived eicosanoids including 15-HETE, PGB1 and F2-isoprostanes (8-iso-PGF2alpha and 5-epi-5-F2t-IsoP). Glucuronates the phytochemical ferulic acid efficently at both the phenolic or the carboxylic acid group. Also catalyzes the glucuronidation of the isoflavones genistein, daidzein, glycitein, formononetin, biochanin A and prunetin, which are phytoestrogens with anticancer and cardiovascular properties. Involved in the glucuronidation of the AGTR1 angiotensin receptor antagonist caderastan, a drug which can inhibit the effect of angiotensin II. Involved in the biotransformation of 7-ethyl-10-hydroxycamptothecin (SN-38), the pharmacologically active metabolite of the anticancer drug irinotecan. Also metabolizes mycophenolate, an immunosuppressive agent. In terms of biological role, lacks UGT glucuronidation activity but acts as a negative regulator of isoform 1. This is UDP-glucuronosyltransferase 1A9 from Homo sapiens (Human).